The primary structure comprises 216 residues: LHFPL tetraspan subfamily member 3 protein (216 aa).

4 helical membrane passes run 22-42 (IGVLWAIFTTLFAIVNVVCFV), 96-116 (FFIGMSMVLVLSCIGCFALFF), 126-146 (ICGWMQLAAGTCLVLGCMIYP), and 177-197 (ILAIMGILDALILSFLAFVLG).

It belongs to the LHFP family.

It localises to the membrane. This chain is LHFPL tetraspan subfamily member 3 protein, found in Danio rerio (Zebrafish).